Here is a 421-residue protein sequence, read N- to C-terminus: 4-hydroxy-3-methylbut-2-en-1-yl diphosphate synthase (flavodoxin) (421 aa).

[4Fe-4S] cluster contacts are provided by cysteine 311, cysteine 314, cysteine 357, and glutamate 364.

It belongs to the IspG family. Requires [4Fe-4S] cluster as cofactor.

It carries out the reaction (2E)-4-hydroxy-3-methylbut-2-enyl diphosphate + oxidized [flavodoxin] + H2O + 2 H(+) = 2-C-methyl-D-erythritol 2,4-cyclic diphosphate + reduced [flavodoxin]. The protein operates within isoprenoid biosynthesis; isopentenyl diphosphate biosynthesis via DXP pathway; isopentenyl diphosphate from 1-deoxy-D-xylulose 5-phosphate: step 5/6. Its function is as follows. Converts 2C-methyl-D-erythritol 2,4-cyclodiphosphate (ME-2,4cPP) into 1-hydroxy-2-methyl-2-(E)-butenyl 4-diphosphate. In Xanthomonas oryzae pv. oryzae (strain KACC10331 / KXO85), this protein is 4-hydroxy-3-methylbut-2-en-1-yl diphosphate synthase (flavodoxin).